Consider the following 180-residue polypeptide: uncharacterized protein (180 aa).

The first 22 residues, Met1 to Ala22, serve as a signal peptide directing secretion. Cysteines 41 and 81 form a disulfide.

The protein belongs to the fimbrial protein family.

Its subcellular location is the fimbrium. This is an uncharacterized protein from Escherichia coli O157:H7.